The chain runs to 499 residues: Serine/threonine protein phosphatase 2A 57 kDa regulatory subunit B' beta isoform (499 aa).

The span at 1 to 13 shows a compositional bias: basic residues; that stretch reads MFKKIMKGGHRKP. Positions 1–65 are disordered; the sequence is MFKKIMKGGH…PVTATPPPPP (65 aa).

It belongs to the phosphatase 2A regulatory subunit B56 family. In terms of assembly, PP2A consists of a common heteromeric enzyme, composed of a catalytic subunit (subunits C), a constant regulatory subunit (subunit A), and a variety of regulatory subunits such as subunits B (the R2/B/PR55/B55, R3/B''/PR72/PR130/PR59 and R5/B'/B56 families). Interacts with BZR1. Interacts with BRI1. Interacts with SRK2E/OST1. In terms of tissue distribution, expressed ubiquitously, higher levels in cotyledons and flowers.

The protein resides in the nucleus. The protein localises to the cytoplasm. Functionally, the B regulatory subunit may modulate substrate selectivity and catalytic activity, and may also direct the localization of the catalytic enzyme to a particular subcellular compartment. Required for the formation of the PP2A holoenzyme that positively regulates brassinosteroid signaling by dephosphorylating and activating BZR1. This is Serine/threonine protein phosphatase 2A 57 kDa regulatory subunit B' beta isoform (B'BETA) from Arabidopsis thaliana (Mouse-ear cress).